Consider the following 759-residue polypeptide: Cullin-4A (759 aa).

Residues 1–40 (MADEGPRKGSVSALMGRTNGLTKPAALAGGPAKPGGTGGS) form a disordered region. Residue lysine 8 forms a Glycyl lysine isopeptide (Lys-Gly) (interchain with G-Cter in SUMO2) linkage. Phosphoserine is present on serine 10. The segment covering 20–31 (GLTKPAALAGGP) has biased composition (low complexity). Lysine 33 participates in a covalent cross-link: Glycyl lysine isopeptide (Lys-Gly) (interchain with G-Cter in ubiquitin). The region spanning 691–750 (DRQYQIDAAIVRIMKMRKTLGHNLLVSELYNQLKFPVKPGDLKKRIESLIDRDYMERDKD) is the Cullin neddylation domain. Residue lysine 705 forms a Glycyl lysine isopeptide (Lys-Gly) (interchain with G-Cter in NEDD8) linkage.

It belongs to the cullin family. In terms of assembly, can self-associate. Component of multiple DCX (DDB1-CUL4-X-box) E3 ubiquitin-protein ligase complexes that seem to consist of DDB1, CUL4A or CUL4B, RBX1 and a variable substrate recognition component which seems to belong to a protein family described as DCAF (Ddb1- and Cul4-associated factor) or CDW (CUL4-DDB1-associated WD40-repeat) proteins. Component of the CSA complex (DCX(ERCC8) complex) containing ERCC8, RBX1, DDB1 and CUL4A; the CSA complex interacts with RNA polymerase II; upon UV irradiation it interacts with the COP9 signalosome and preferentially with the hyperphosphorylated form of RNA polymerase II. Component of the DCX(DET1-COP1) complex with the substrate recognition component DET1 and COP1. Component of the DCX(DDB2) complex with the substrate recognition component DDB2. Component of the DCX(DTL) complex with the putative substrate recognition component DTL. Component of DCX complexes part of the DesCEND (destruction via C-end degrons) pathway, which contain either TRPC4AP or DCAF12 as substrate-recognition component. Component of the DCX(AMBRA1) complex with the substrate recognition component AMBRA1. Interacts with DDB1, RBX1, RNF7, CDT1, TIP120A/CAND1, SKP2, CDKN1B, MDM2, TP53 and HOXA9. Interacts with DDB2; the interactions with DDB2 and CAND1 are mutually exclusive. Interacts with DCAF1, DTL, DDA1, DCAF6, DCAF4, DCAF16, DCAF17, DET1, WDTC1, DCAF5, DCAF11, WDR24A, COP1, PAFAH1B1, ERCC8, GRWD1, FBXW5, RBBP7, GNB2, WSB1, WSB2, NUP43, PWP1, FBXW8, ATG16L1, KATNB1, RBBP4, RBBP5, LRWD1 and DCAF8. May interact with WDR26, WDR51B, SNRNP40, WDR61, WDR76, WDR5. Interacts (when neddylated) with ARIH1; leading to activate the E3 ligase activity of ARIH1. The DDB1-CUL4A complex interacts with CRY1. Interacts (unneddylated form) with DCUN1D1, DCUN1D2, DCUN1D3, DCUN1D4 and DCUN1D5; these interactions promote the cullin neddylation. (Microbial infection) Interacts with murine cytomegalovirus M48. In terms of processing, neddylated; required for activity of cullin-RING-based E3 ubiquitin-protein ligase complexes. Deneddylated via its interaction with the COP9 signalosome (CSN) complex. Post-translationally, (Microbial infection) Deneddylated by murine cytomegalovirus M48 leading to a S-phase-like environment that is required for efficient replication of the viral genome. As to expression, expressed in oocytes (at protein level). In the ovary, also expressed in cumulus cells. Expressed in testis, spleen and kidney.

It participates in protein modification; protein ubiquitination. Core component of multiple cullin-RING-based E3 ubiquitin-protein ligase complexes which mediate the ubiquitination of target proteins. As a scaffold protein may contribute to catalysis through positioning of the substrate and the ubiquitin-conjugating enzyme. The E3 ubiquitin-protein ligase activity of the complex is dependent on the neddylation of the cullin subunit and is inhibited by the association of the deneddylated cullin subunit with TIP120A/CAND1. The functional specificity of the E3 ubiquitin-protein ligase complex depends on the variable substrate recognition component. DCX(DET1-COP1) directs ubiquitination of JUN. DCX(DDB2) directs ubiquitination of XPC. DCX(DDB2) ubiquitinates histones H3-H4 and is required for efficient histone deposition during replication-coupled (H3.1) and replication-independent (H3.3) nucleosome assembly, probably by facilitating the transfer of H3 from ASF1A/ASF1B to other chaperones involved in histone deposition. DCX(DTL) plays a role in PCNA-dependent polyubiquitination of CDT1 and MDM2-dependent ubiquitination of p53/TP53 in response to radiation-induced DNA damage and during DNA replication. DCX(DTL) directs autoubiquitination of DTL. In association with DDB1 and SKP2 probably is involved in ubiquitination of CDKN1B/p27kip. Is involved in ubiquitination of HOXA9. The DDB1-CUL4A-DTL E3 ligase complex regulates the circadian clock function by mediating the ubiquitination and degradation of CRY1. The DCX(ERCC8) complex (also named CSA complex) plays a role in transcription-coupled repair (TCR). A number of DCX complexes (containing either TRPC4AP or DCAF12 as substrate-recognition component) are part of the DesCEND (destruction via C-end degrons) pathway, which recognizes a C-degron located at the extreme C terminus of target proteins, leading to their ubiquitination and degradation. With CUL4B, contributes to ribosome biogenesis. The DCX(AMBRA1) complex is a master regulator of the transition from G1 to S cell phase by mediating ubiquitination of phosphorylated cyclin-D (CCND1, CCND2 and CCND3). The DCX(AMBRA1) complex also acts as a regulator of Cul5-RING (CRL5) E3 ubiquitin-protein ligase complexes by mediating ubiquitination and degradation of Elongin-C (ELOC) component of CRL5 complexes. This chain is Cullin-4A, found in Mus musculus (Mouse).